Reading from the N-terminus, the 1470-residue chain is Roundabout homolog 2 (1470 aa).

The signal sequence occupies residues 1–21; sequence MNPLMFTLLLLFGFLCIQIDG. Residues 22–863 lie on the Extracellular side of the membrane; it reads SRLRQEDFPP…EQITDVVKQP (842 aa). Ig-like C2-type domains are found at residues 31 to 127, 133 to 220, 225 to 309, 318 to 413, and 422 to 508; these read PRIV…ASLE, DDFR…AELT, PTFL…ATLT, PQFV…LEVT, and PIIL…AVLD. Residues Cys52 and Cys110 are joined by a disulfide bond. Residue Asn123 is glycosylated (N-linked (GlcNAc...) asparagine). Cystine bridges form between Cys154–Cys203, Cys246–Cys293, and Cys339–Cys395. A glycan (N-linked (GlcNAc...) asparagine) is linked at Asn430. Cys443 and Cys492 form a disulfide bridge. 3 consecutive Fibronectin type-III domains span residues 528-622, 641-739, and 743-840; these read PPSK…TQDI, VVVR…TEEA, and PPQS…IGGR. N-linked (GlcNAc...) asparagine glycans are attached at residues Asn756, Asn786, Asn793, and Asn849. Residues 864-884 form a helical membrane-spanning segment; sequence AFIAGIGGACWVILMGFSIWL. Over 885 to 1470 the chain is Cytoplasmic; it reads YWRRKKRKGL…GSNSQGQFTE (586 aa). Disordered stretches follow at residues 1036-1089, 1129-1159, 1190-1371, and 1383-1470; these read GFGY…LPGT, EDRV…LTPS, IQSN…DCPA, and DWIN…QFTE. Polar residues predominate over residues 1144-1158; it reads PAISFGQQSTATLTP. The residue at position 1157 (Thr1157) is a Phosphothreonine. Phosphoserine is present on Ser1159. Over residues 1194-1203 the composition is skewed to pro residues; the sequence is TPPPQPPAPP. A compositionally biased stretch (acidic residues) spans 1215–1231; the sequence is LETDVPDEDADDEEEPL. Positions 1243 to 1288 are enriched in polar residues; it reads TPGSSMDNLDSSVTGKAFSSSQRQRPTSPFSTDSNTSAAQNQSQRP. Residues 1315–1325 are compositionally biased toward pro residues; sequence DLPPPPDPPPG. A compositionally biased stretch (polar residues) spans 1328 to 1343; that stretch reads LRQQIGLSQHSGNVEN. Low complexity predominate over residues 1413–1437; that stretch reads SKPSFPSPGGHSSSGTSSSKGSTGP. Over residues 1461-1470 the composition is skewed to polar residues; it reads GSNSQGQFTE.

It belongs to the immunoglobulin superfamily. ROBO family. As to quaternary structure, interacts with SLIT2. As to expression, expressed in embryonal spinal cord.

The protein localises to the membrane. Receptor for SLIT2, and probably SLIT1, which are thought to act as molecular guidance cue in cellular migration, including axonal navigation at the ventral midline of the neural tube and projection of axons to different regions during neuronal development. This chain is Roundabout homolog 2 (Robo2), found in Mus musculus (Mouse).